Reading from the N-terminus, the 254-residue chain is Ribosomal RNA small subunit methyltransferase J (254 aa).

Residues 107–108, 123–124, and Asp174 each bind S-adenosyl-L-methionine; these read RD and ER.

The protein belongs to the methyltransferase superfamily. RsmJ family.

It localises to the cytoplasm. The catalysed reaction is guanosine(1516) in 16S rRNA + S-adenosyl-L-methionine = N(2)-methylguanosine(1516) in 16S rRNA + S-adenosyl-L-homocysteine + H(+). Specifically methylates the guanosine in position 1516 of 16S rRNA. The sequence is that of Ribosomal RNA small subunit methyltransferase J from Coxiella burnetii (strain CbuK_Q154) (Coxiella burnetii (strain Q154)).